Consider the following 432-residue polypeptide: Glutamate-1-semialdehyde 2,1-aminomutase (432 aa).

Residue Lys-270 is modified to N6-(pyridoxal phosphate)lysine.

It belongs to the class-III pyridoxal-phosphate-dependent aminotransferase family. HemL subfamily. As to quaternary structure, homodimer. Requires pyridoxal 5'-phosphate as cofactor.

It is found in the cytoplasm. The catalysed reaction is (S)-4-amino-5-oxopentanoate = 5-aminolevulinate. Its pathway is porphyrin-containing compound metabolism; protoporphyrin-IX biosynthesis; 5-aminolevulinate from L-glutamyl-tRNA(Glu): step 2/2. In Acinetobacter baumannii (strain ACICU), this protein is Glutamate-1-semialdehyde 2,1-aminomutase.